The sequence spans 198 residues: Peptidyl-tRNA hydrolase (198 aa).

Residue tyrosine 15 coordinates tRNA. The active-site Proton acceptor is the histidine 20. Residues phenylalanine 65, asparagine 67, and asparagine 113 each contribute to the tRNA site.

The protein belongs to the PTH family. Monomer.

Its subcellular location is the cytoplasm. It catalyses the reaction an N-acyl-L-alpha-aminoacyl-tRNA + H2O = an N-acyl-L-amino acid + a tRNA + H(+). Functionally, hydrolyzes ribosome-free peptidyl-tRNAs (with 1 or more amino acids incorporated), which drop off the ribosome during protein synthesis, or as a result of ribosome stalling. Its function is as follows. Catalyzes the release of premature peptidyl moieties from peptidyl-tRNA molecules trapped in stalled 50S ribosomal subunits, and thus maintains levels of free tRNAs and 50S ribosomes. In Ehrlichia chaffeensis (strain ATCC CRL-10679 / Arkansas), this protein is Peptidyl-tRNA hydrolase.